We begin with the raw amino-acid sequence, 167 residues long: Leptin (167 aa).

A signal peptide spans 1-21 (MCWRPLCRFLWLWSYLSYVQA). A disulfide bridge links cysteine 117 with cysteine 167.

This sequence belongs to the leptin family.

The protein localises to the secreted. Functionally, key player in the regulation of energy balance and body weight control. Once released into the circulation, has central and peripheral effects by binding LEPR, found in many tissues, which results in the activation of several major signaling pathways. In the hypothalamus, acts as an appetite-regulating factor that induces a decrease in food intake and an increase in energy consumption by inducing anorexinogenic factors and suppressing orexigenic neuropeptides, also regulates bone mass and secretion of hypothalamo-pituitary-adrenal hormones. In the periphery, increases basal metabolism, influences reproductive function, regulates pancreatic beta-cell function and insulin secretion, is pro-angiogenic for endothelial cell and affects innate and adaptive immunity. In the arcuate nucleus of the hypothalamus, activates by depolarization POMC neurons inducing FOS and SOCS3 expression to release anorexigenic peptides and inhibits by hyperpolarization NPY neurons inducing SOCS3 with a consequent reduction on release of orexigenic peptides. In addition to its known satiety inducing effect, has a modulatory role in nutrient absorption. In the intestine, reduces glucose absorption by enterocytes by activating PKC and leading to a sequential activation of p38, PI3K and ERK signaling pathways which exerts an inhibitory effect on glucose absorption. Acts as a growth factor on certain tissues, through the activation of different signaling pathways increases expression of genes involved in cell cycle regulation such as CCND1, via JAK2-STAT3 pathway, or VEGFA, via MAPK1/3 and PI3K-AKT1 pathways. May also play an apoptotic role via JAK2-STAT3 pathway and up-regulation of BIRC5 expression. Pro-angiogenic, has mitogenic activity on vascular endothelial cells and plays a role in matrix remodeling by regulating the expression of matrix metalloproteinases (MMPs) and tissue inhibitors of metalloproteinases (TIMPs). In innate immunity, modulates the activity and function of neutrophils by increasing chemotaxis and the secretion of oxygen radicals. Increases phagocytosis by macrophages and enhances secretion of pro-inflammatory mediators. Increases cytotoxic ability of NK cells. Plays a pro-inflammatory role, in synergy with IL1B, by inducing NOS2 which promotes the production of IL6, IL8 and Prostaglandin E2, through a signaling pathway that involves JAK2, PI3K, MAP2K1/MEK1 and MAPK14/p38. In adaptive immunity, promotes the switch of memory T-cells towards T helper-1 cell immune responses. Increases CD4(+)CD25(-) T-cell proliferation and reduces autophagy during TCR (T-cell receptor) stimulation, through MTOR signaling pathway activation and BCL2 up-regulation. The protein is Leptin (Lep) of Rattus norvegicus (Rat).